Here is a 1477-residue protein sequence, read N- to C-terminus: Alpha-1-inhibitor 3 (1477 aa).

An N-terminal signal peptide occupies residues M1–L24. A disulfide bridge links C48 with C86. N55 and N247 each carry an N-linked (GlcNAc...) asparagine glycan. Cystine bridges form between C251-C295 and C269-C283. 4 N-linked (GlcNAc...) asparagine glycosylation sites follow: N301, N321, N393, and N508. Disulfide bonds link C468/C563, C595/C774, and C643/C678. The segment at D601–N750 is bait region (approximate). N-linked (GlcNAc...) asparagine glycans are attached at residues N750, N777, and N872. 4 disulfides stabilise this stretch: C850–C886, C924–C1324, C1082–C1130, and C1355–C1470. Positions C975 to Q978 form a cross-link, isoglutamyl cysteine thioester (Cys-Gln). An N-linked (GlcNAc...) asparagine glycan is attached at N994. N-linked (GlcNAc...) asparagine glycosylation is found at N1143, N1314, and N1427.

Belongs to the protease inhibitor I39 (alpha-2-macroglobulin) family. In terms of assembly, monomer.

The protein localises to the secreted. Functionally, protease inhibitor with a wide spectrum of protein targets, which attaches through its thioester function. In Rattus norvegicus (Rat), this protein is Alpha-1-inhibitor 3 (A1i3).